The chain runs to 449 residues: UDP-N-acetylmuramoylalanine--D-glutamate ligase (449 aa).

118 to 124 (GSNGKTT) contributes to the ATP binding site.

This sequence belongs to the MurCDEF family.

It is found in the cytoplasm. It catalyses the reaction UDP-N-acetyl-alpha-D-muramoyl-L-alanine + D-glutamate + ATP = UDP-N-acetyl-alpha-D-muramoyl-L-alanyl-D-glutamate + ADP + phosphate + H(+). It functions in the pathway cell wall biogenesis; peptidoglycan biosynthesis. In terms of biological role, cell wall formation. Catalyzes the addition of glutamate to the nucleotide precursor UDP-N-acetylmuramoyl-L-alanine (UMA). The polypeptide is UDP-N-acetylmuramoylalanine--D-glutamate ligase (Oceanobacillus iheyensis (strain DSM 14371 / CIP 107618 / JCM 11309 / KCTC 3954 / HTE831)).